Consider the following 723-residue polypeptide: FACT complex subunit Ssrp1 (723 aa).

Residue Ser-443 is modified to Phosphoserine. Disordered stretches follow at residues 459–564 (EARE…AFML) and 586–723 (AKKG…EASD). Acidic residues-rich tracts occupy residues 464–478 (EEDDDDGDSDEESTD) and 486–507 (NESDVAEEYDSNVESDSDDDSD). The span at 531 to 557 (KKEKKHKEKERTKKPSKKKKDSGKPKR) shows a compositional bias: basic residues. Positions 555–621 (PKRATTAFML…RYHDEMRNYK (67 aa)) form a DNA-binding region, HMG box. A compositionally biased stretch (basic and acidic residues) spans 586–621 (AKKGGEMWKELKDKSKWEDAAAKDKQRYHDEMRNYK). Ser-628 is modified (phosphoserine). Polar residues predominate over residues 644–656 (PSPSKKANTSGSG). Phosphoserine is present on residues Ser-664 and Ser-668. The span at 664–676 (SDDDSTSSDDEKD) shows a compositional bias: acidic residues. Thr-669 carries the phosphothreonine modification. 2 positions are modified to phosphoserine: Ser-670 and Ser-671. Positions 677 to 692 (NEPAKKKSKPPSDGDA) are enriched in basic and acidic residues. Residues 702–723 (EPEESEEDSNASDEDEEDEASD) show a composition bias toward acidic residues.

It belongs to the SSRP1 family. Component of the FACT complex, a stable heterodimer of dre4/spt16 and Ssrp. Interacts with CHD1 and TRL/GAGA. Expressed at highest levels in nurse cells of the ovary.

The protein resides in the nucleus. It localises to the chromosome. The protein localises to the nucleolus. Functionally, component of the FACT complex, a general chromatin factor that acts to reorganize nucleosomes. The FACT complex is involved in multiple processes that require DNA as a template such as mRNA elongation, DNA replication and DNA repair. During transcription elongation the FACT complex acts as a histone chaperone that both destabilizes and restores nucleosomal structure. It facilitates the passage of RNA polymerase II and transcription by promoting the dissociation of one histone H2A-H2B dimer from the nucleosome, then subsequently promotes the reestablishment of the nucleosome following the passage of RNA polymerase II. Binds specifically to single-stranded DNA and RNA with highest affinity for nucleotides G and U. The FACT complex is required for expression of Hox genes. The protein is FACT complex subunit Ssrp1 (Ssrp) of Drosophila melanogaster (Fruit fly).